We begin with the raw amino-acid sequence, 158 residues long: MKKQGFPPVIDENTEILILGSLPGDVSIRKHQYYGHPGNDFWRLLGSIIGEDLQSINYQNRLEALKRNKIGLWDVFKAGKREGNEDTKIKDEEINQFSILKDMAPNLKLVLFNGKKSGEYEPILRAMGYETKILLSSSGANRRSLKSRKSGWAEAFKR.

Residue asparagine 39 is part of the active site.

The protein belongs to the uracil-DNA glycosylase (UDG) superfamily. Type 6 (HDG) family.

Its function is as follows. Excises hypoxanthine, a deamination product of adenine, from double-stranded DNA. Acts on double-stranded DNA containing G/I, T/I, A/I and C/I base pairs, but not on single-stranded inosine-containing DNA. Also has minor xanthine DNA glycosylase activity. Lacks any detectable uracil-DNA glycosylase activity. This Methanosarcina barkeri (strain Fusaro / DSM 804) protein is Hypoxanthine DNA glycosylase.